A 513-amino-acid polypeptide reads, in one-letter code: MDTESKNKKTTNGGENSNCSHSTRTPDKSIEERFYNWERRSRTTNRFGTTVNSRSYNMYFQGTHNTSRRHTYGNIHHRRRFSDNIRRCLRQLCMKRKTPAKKRSDKLVSRPSLPEHVFTLARIKNVTTFIFNVTSELHYSHIDLKEMPIYAGSGSYGVVKIFKKTDIAVKKVLECFKTELLMTLIAGECALRAKSTLRINNIIPLLAFSIPSKELVFPAYHMDMDSYYHRLARIDKTVQHWKAIEKTFMDLGKAVVFLNVSCGLTHLDIKCGNIFVNVTEGPNPILVDAVIGDFSLALLNTNSTILKSRFDVNISSDKIQSLKVCRGNIKPVFDLVLGHGQTQPCELMIKALNGVGFERRSTPLTSDEGVSIDMYALGQSLMEVILAAGMNFTHRFGISSNPLHFYYHRLMRADYLLDILAYRCMLYQHLFPMTPLTSKNGIPWERAEKIRLQLHSSRHRAEFDKYLEAYDITHRKLFDSLNIFPYLNNLLELAALYCHANPVARTADLLLWN.

The disordered stretch occupies residues 1-27 (MDTESKNKKTTNGGENSNCSHSTRTPD). Residues 10–23 (TTNGGENSNCSHST) show a composition bias toward polar residues. Positions 145–487 (KEMPIYAGSG…FDSLNIFPYL (343 aa)) constitute a Protein kinase domain. ATP contacts are provided by residues 151–159 (AGSGSYGVV) and Lys170. Asp268 functions as the Proton acceptor in the catalytic mechanism.

The protein belongs to the protein kinase superfamily. Ser/Thr protein kinase family. Autophosphorylated.

Its subcellular location is the virion tegument. The protein resides in the host nucleus. The catalysed reaction is L-seryl-[protein] + ATP = O-phospho-L-seryl-[protein] + ADP + H(+). The enzyme catalyses L-threonyl-[protein] + ATP = O-phospho-L-threonyl-[protein] + ADP + H(+). Functionally, multifunctional serine/threonine kinase that plays a role in several processes including egress of virus particles from the nucleus, modulation of the actin cytoskeleton and regulation of viral and cellular gene expression. This is Serine/threonine-protein kinase UL13 homolog (MDV025) from Gallid herpesvirus 2 (strain Chicken/Md5/ATCC VR-987) (GaHV-2).